Consider the following 3704-residue polypeptide: Fatty acid synthase 2 (3704 aa).

Residues 27 to 41 are compositionally biased toward low complexity; that stretch reads AVSAHGSPPSSASPG. The interval 27–52 is disordered; sequence AVSAHGSPPSSASPGPDDKAFSVDGT. The segment at 216–475 is acetyltransferase (AT) domain; sequence ALFGGQGNNH…QARIPFSKRK (260 aa). Positions 639–887 are enoyl reductase (ER) domain; sequence SRLLGKPPIM…LIASTQGCSD (249 aa). The tract at residues 1216-1709 is dehydratase (DH) domain; the sequence is GEQPSWIRAL…VPGDQLSVQL (494 aa). The MaoC-like domain occupies 1624-1730; it reads PKTNEPYSRA…VQIDASNQRG (107 aa). The malonyl/palmitoyl transferase (MT/PT) domain stretch occupies residues 1747–2112; that stretch reads YVFTGQGSQA…IEHVSEVTRS (366 aa). The 79-residue stretch at 2265 to 2343 folds into the Carrier domain; sequence DERLDPLLTV…AALRPGYSGE (79 aa). Serine 2303 is subject to O-(pantetheine 4'-phosphoryl)serine. A ketoreductase (KR) domain region spans residues 2733 to 2969; sequence GLDVLLTGVG…LGLVEPEFAS (237 aa). The Ketosynthase family 3 (KS3) domain occupies 3176–3623; the sequence is QQEIELTHDL…QVGGIAMILH (448 aa). Residues cysteine 3359, histidine 3506, and histidine 3547 each act as for beta-ketoacyl synthase activity in the active site.

The protein in the N-terminal section; belongs to the fungal fatty acid synthetase subunit beta family. In the C-terminal section; belongs to the thiolase-like superfamily. Fungal fatty acid synthetase subunit alpha family.

It functions in the pathway secondary metabolite biosynthesis. In terms of biological role, fatty acid synthase; part of the gene cluster that mediates the biosynthesis of the glycolipid biosurfactant ustilagic acid (UA). UA is a secreted cellobiose glycolipid that is toxic for many microorganisms and confers biocontrol activity to U.maydis. UA consists of 15,16-dihydroxypalmitic or 2,15,16-trihydroxypalmitic acid, which is O-glycosidically linked to cellobiose at its terminal hydroxyl group. In addition, the cellobiose moiety is acetylated and acylated with a short-chain hydroxy fatty acid. UA biosynthesis starts with omega-hydroxylation of palmitic acid catalyzed by the cytochrome P450 monooxygenase cyp1. Terminal hydroxylation of palmitic acid precedes subterminal hydroxylation catalyzed by the cytochrome P450 monooxygenase cyp2. Sequential glucosylation of the hydroxy fatty acid is probably catalyzed by the glycosyltransferase ugt1. The cellobiose lipid is further decorated by acetylation of the proximal glucose residue and by acylation with a short-chain beta-hydroxy fatty acid at the distal glucose residue. The acyltransferase uat1 may be a good candidate for catalyzing either acetylation or acylation of the cellobiose lipid. The fatty acid synthase fas2 may be involved in synthesis of the carbon backbone of the short-chain beta-hydroxy fatty acid esterified to the cellobiose disaccharide. The secreted UA consists of a mixture of both alpha-hydroxylated and non-hydroxylated glycolipids; therefore, alpha-hydroxylation of the long-chain fatty, catalyzed by the fatty acid hydroxylase ahd1, occurs late in UA biosynthesis and may be the last step before secretion. In Mycosarcoma maydis (Corn smut fungus), this protein is Fatty acid synthase 2.